Reading from the N-terminus, the 329-residue chain is Ribosomal RNA small subunit methyltransferase H (329 aa).

S-adenosyl-L-methionine is bound by residues 46 to 48 (GGH), Asp-65, Phe-92, Asp-113, and His-120. The segment at 295–329 (RGAERPSPAEVAANPRAASARLRAAEKIRDTREAA) is disordered. The segment covering 317-329 (RAAEKIRDTREAA) has biased composition (basic and acidic residues).

Belongs to the methyltransferase superfamily. RsmH family.

Its subcellular location is the cytoplasm. The enzyme catalyses cytidine(1402) in 16S rRNA + S-adenosyl-L-methionine = N(4)-methylcytidine(1402) in 16S rRNA + S-adenosyl-L-homocysteine + H(+). Functionally, specifically methylates the N4 position of cytidine in position 1402 (C1402) of 16S rRNA. This chain is Ribosomal RNA small subunit methyltransferase H, found in Acidothermus cellulolyticus (strain ATCC 43068 / DSM 8971 / 11B).